We begin with the raw amino-acid sequence, 393 residues long: Putative amino-acid ABC transporter permease protein YhdX (393 aa).

8 helical membrane passes run Ala-21–His-41, Leu-92–Ala-112, Ile-128–Leu-148, Asp-180–Phe-200, Ile-219–Leu-239, Val-256–Ile-276, Ser-333–Leu-353, and Ile-363–Ile-383. An ABC transmembrane type-1 domain is found at Leu-88–Met-381.

It belongs to the binding-protein-dependent transport system permease family. HisMQ subfamily.

The protein localises to the cell inner membrane. Probably part of the binding-protein-dependent transport system YdhWXYZ for an amino acid; probably responsible for the translocation of the substrate across the membrane. This Escherichia coli (strain K12) protein is Putative amino-acid ABC transporter permease protein YhdX (yhdX).